The chain runs to 440 residues: Putative epoxide hydrolase (440 aa).

Positions 1–21 (MTKTLAEQPGEGAAPVSPSPS) are disordered. The tat-type signal signal peptide spans 1–49 (MTKTLAEQPGEGAAPVSPSPSRRALLHGAAGLGALAAGAAVAGPGLAFA).

The protein belongs to the peptidase S33 family. Predicted to be exported by the Tat system. The position of the signal peptide cleavage has not been experimentally proven.

The enzyme catalyses an epoxide + H2O = an ethanediol. The sequence is that of Putative epoxide hydrolase from Stigmatella aurantiaca (strain DW4/3-1).